We begin with the raw amino-acid sequence, 266 residues long: Sec-independent protein translocase protein TatC (266 aa).

6 helical membrane-spanning segments follow: residues 28–48 (MIIATIILMNNKNVIFDYILF), 93–113 (FNIYVWTCFIGGFILSFPYIF), 134–154 (GIIMMVTFLFILGVLFGYFIL), 183–203 (LIMHSILSMGITFLFPIFIYF), 221–241 (HAFLILLILASAITPGDIFST), and 242–262 (IVVLIPLMILYQFSIYISFYV).

It belongs to the TatC family. Forms a complex with TatA.

The protein localises to the cell inner membrane. Its function is as follows. Part of the twin-arginine translocation (Tat) system that transports large folded proteins containing a characteristic twin-arginine motif in their signal peptide across membranes. This chain is Sec-independent protein translocase protein TatC, found in Blattabacterium sp. subsp. Periplaneta americana (strain BPLAN) (Periplaneta americana symbiotic bacterium).